The primary structure comprises 77 residues: Sec-independent protein translocase protein TatA (77 aa).

Residues methionine 1–glycine 21 form a helical membrane-spanning segment. The tract at residues lysine 40–valine 77 is disordered. Residues isoleucine 65–valine 77 show a composition bias toward basic and acidic residues.

The protein belongs to the TatA/E family. The Tat system comprises two distinct complexes: a TatABC complex, containing multiple copies of TatA, TatB and TatC subunits, and a separate TatA complex, containing only TatA subunits. Substrates initially bind to the TatABC complex, which probably triggers association of the separate TatA complex to form the active translocon.

Its subcellular location is the cell inner membrane. Part of the twin-arginine translocation (Tat) system that transports large folded proteins containing a characteristic twin-arginine motif in their signal peptide across membranes. TatA could form the protein-conducting channel of the Tat system. In Nitrosomonas eutropha (strain DSM 101675 / C91 / Nm57), this protein is Sec-independent protein translocase protein TatA.